Here is a 443-residue protein sequence, read N- to C-terminus: ATP-dependent protease ATPase subunit HslU (443 aa).

ATP contacts are provided by residues I18, 60 to 65, D256, E321, and R393; that span reads GVGKTE.

Belongs to the ClpX chaperone family. HslU subfamily. In terms of assembly, a double ring-shaped homohexamer of HslV is capped on each side by a ring-shaped HslU homohexamer. The assembly of the HslU/HslV complex is dependent on binding of ATP.

It is found in the cytoplasm. In terms of biological role, ATPase subunit of a proteasome-like degradation complex; this subunit has chaperone activity. The binding of ATP and its subsequent hydrolysis by HslU are essential for unfolding of protein substrates subsequently hydrolyzed by HslV. HslU recognizes the N-terminal part of its protein substrates and unfolds these before they are guided to HslV for hydrolysis. The protein is ATP-dependent protease ATPase subunit HslU of Tolumonas auensis (strain DSM 9187 / NBRC 110442 / TA 4).